A 181-amino-acid chain; its full sequence is MKNDFFNYYKTKIIPQYLKDYNKKKALEVPVIKKIVISRGIGKANTLEINNYIEESIKEFLIMTGQKPKLNRAKKHIAAFKIKKKMILGLSVTLRGAKMYAFLYKFINIILPNIRQFQGIENKQFDSLGNITFPIYSQSNIPELPYNPRVEKRGFNVTINIKAKNVSEAKALCAYLGFPII.

It belongs to the universal ribosomal protein uL5 family. As to quaternary structure, part of the 50S ribosomal subunit; contacts the 5S rRNA.

It is found in the plastid. In terms of biological role, binds 5S rRNA, forms part of the central protuberance of the 50S subunit. This Helicosporidium sp. subsp. Simulium jonesii (Green alga) protein is Large ribosomal subunit protein uL5c (rpl5).